Consider the following 171-residue polypeptide: Transcription elongation factor GreB (171 aa).

Residues 53 to 75 (KKRLREIDRRVRFLAKRLEVLKI) adopt a coiled-coil conformation.

The protein belongs to the GreA/GreB family. GreB subfamily.

Necessary for efficient RNA polymerase transcription elongation past template-encoded arresting sites. The arresting sites in DNA have the property of trapping a certain fraction of elongating RNA polymerases that pass through, resulting in locked ternary complexes. Cleavage of the nascent transcript by cleavage factors such as GreA or GreB allows the resumption of elongation from the new 3'terminus. GreB releases sequences of up to 9 nucleotides in length. The sequence is that of Transcription elongation factor GreB from Yersinia pestis.